A 184-amino-acid chain; its full sequence is MAFPTVEVLTELVTPVVAQHNMDLEGIRINKAGKKSLVAVSVDSDFRPDLDQLELVSNQISEVFDAGEAAGELSFGAGYTLEVGTPGLDQPLASARRWRRNRHRLVALEVEGKKSVERIGALNDDETAVIVVKRRGKKLVVRSVQLAENTQAVVEIEFAKPAEDELALTALEFDQALDRGEENK.

The protein belongs to the RimP family.

It is found in the cytoplasm. Its function is as follows. Required for maturation of 30S ribosomal subunits. The polypeptide is Ribosome maturation factor RimP (Corynebacterium diphtheriae (strain ATCC 700971 / NCTC 13129 / Biotype gravis)).